Reading from the N-terminus, the 165-residue chain is Nucleotide-binding protein A9601_05361 (165 aa).

The protein belongs to the YajQ family.

Functionally, nucleotide-binding protein. In Prochlorococcus marinus (strain AS9601), this protein is Nucleotide-binding protein A9601_05361.